The primary structure comprises 152 residues: Transcriptional regulator MraZ (152 aa).

SpoVT-AbrB domains follow at residues 5 to 52 (ASAI…PIHE) and 81 to 124 (AHEV…DEQA).

This sequence belongs to the MraZ family. Forms oligomers.

Its subcellular location is the cytoplasm. The protein localises to the nucleoid. The polypeptide is Transcriptional regulator MraZ (Shewanella oneidensis (strain ATCC 700550 / JCM 31522 / CIP 106686 / LMG 19005 / NCIMB 14063 / MR-1)).